A 322-amino-acid polypeptide reads, in one-letter code: Lipoyl synthase (322 aa).

[4Fe-4S] cluster is bound by residues C66, C71, C77, C92, C96, C99, and S306. The Radical SAM core domain occupies 78-295 (FSKGTATFMI…EKEAYELGFS (218 aa)).

This sequence belongs to the radical SAM superfamily. Lipoyl synthase family. The cofactor is [4Fe-4S] cluster.

The protein resides in the cytoplasm. It carries out the reaction [[Fe-S] cluster scaffold protein carrying a second [4Fe-4S](2+) cluster] + N(6)-octanoyl-L-lysyl-[protein] + 2 oxidized [2Fe-2S]-[ferredoxin] + 2 S-adenosyl-L-methionine + 4 H(+) = [[Fe-S] cluster scaffold protein] + N(6)-[(R)-dihydrolipoyl]-L-lysyl-[protein] + 4 Fe(3+) + 2 hydrogen sulfide + 2 5'-deoxyadenosine + 2 L-methionine + 2 reduced [2Fe-2S]-[ferredoxin]. The protein operates within protein modification; protein lipoylation via endogenous pathway; protein N(6)-(lipoyl)lysine from octanoyl-[acyl-carrier-protein]: step 2/2. Functionally, catalyzes the radical-mediated insertion of two sulfur atoms into the C-6 and C-8 positions of the octanoyl moiety bound to the lipoyl domains of lipoate-dependent enzymes, thereby converting the octanoylated domains into lipoylated derivatives. The polypeptide is Lipoyl synthase (Neisseria meningitidis serogroup C (strain 053442)).